Consider the following 386-residue polypeptide: DNA replication and repair protein RecF (386 aa).

30 to 37 (GSNGFGKT) contributes to the ATP binding site.

This sequence belongs to the RecF family.

Its subcellular location is the cytoplasm. The RecF protein is involved in DNA metabolism; it is required for DNA replication and normal SOS inducibility. RecF binds preferentially to single-stranded, linear DNA. It also seems to bind ATP. The sequence is that of DNA replication and repair protein RecF from Mycolicibacterium vanbaalenii (strain DSM 7251 / JCM 13017 / BCRC 16820 / KCTC 9966 / NRRL B-24157 / PYR-1) (Mycobacterium vanbaalenii).